Reading from the N-terminus, the 325-residue chain is Phage-like element PBSX protein XkdQ (325 aa).

To B.subtilis YqbQ.

The chain is Phage-like element PBSX protein XkdQ (xkdQ) from Bacillus subtilis (strain 168).